Here is a 60-residue protein sequence, read N- to C-terminus: uncharacterized protein (60 aa).

This is an uncharacterized protein from Archaeoglobus fulgidus (strain ATCC 49558 / DSM 4304 / JCM 9628 / NBRC 100126 / VC-16).